A 542-amino-acid chain; its full sequence is uncharacterized protein (542 aa).

Transmembrane regions (helical) follow at residues 12–32 (LVFG…GTVL), 57–77 (FGDV…AILY), 94–114 (VIVM…SWTA), 123–143 (AAAV…AGLA), 168–188 (LFAV…AALV), 191–211 (FVVS…LVTL), 216–236 (IDAP…AFLL), 243–263 (SGVV…PTVI), 277–297 (IATF…IPGA), 313–333 (VLAL…VQAT), 358–378 (VTSW…AVPM), and 391–411 (LIIF…GTSL).

The protein belongs to the monovalent cation:proton antiporter 1 (CPA1) transporter (TC 2.A.36) family.

The protein localises to the cell membrane. This is an uncharacterized protein from Mycobacterium bovis (strain ATCC BAA-935 / AF2122/97).